A 93-amino-acid polypeptide reads, in one-letter code: Photosystem I iron-sulfur center (93 aa).

4Fe-4S ferredoxin-type domains are found at residues 13–43 and 50–80; these read KDHE…MVPS and QVVT…IRVY. Positions 23, 26, 29, 33, 60, 63, 66, and 70 each coordinate [4Fe-4S] cluster.

The eukaryotic PSI reaction center is composed of at least 11 subunits. It depends on [4Fe-4S] cluster as a cofactor.

The protein localises to the plastid. The protein resides in the chloroplast thylakoid membrane. It catalyses the reaction reduced [plastocyanin] + hnu + oxidized [2Fe-2S]-[ferredoxin] = oxidized [plastocyanin] + reduced [2Fe-2S]-[ferredoxin]. Its function is as follows. Apoprotein for the two 4Fe-4S centers FA and FB of photosystem I (PSI); essential for photochemical activity. FB is the terminal electron acceptor of PSI, donating electrons to ferredoxin. The C-terminus interacts with PsaA/B/D and helps assemble the protein into the PSI complex. Required for binding of PsaD and PsaE to PSI. PSI is a plastocyanin-ferredoxin oxidoreductase, converting photonic excitation into a charge separation, which transfers an electron from the donor P700 chlorophyll pair to the spectroscopically characterized acceptors A0, A1, FX, FA and FB in turn. This is Photosystem I iron-sulfur center from Bigelowiella natans (Pedinomonas minutissima).